We begin with the raw amino-acid sequence, 173 residues long: RNA polymerase sigma factor TcsR (173 aa).

A sigma-70 factor domain-4 region spans residues 122 to 169 (IKDLTQNEKNILRKIYLHGLRESEISRELNISRQAVNKTHLRALEKLK). Positions 143–162 (ESEISRELNISRQAVNKTHL) form a DNA-binding region, H-T-H motif.

It belongs to the sigma-70 factor family.

Functionally, sigma factors are initiation factors that promote the attachment of RNA polymerase to specific initiation sites and are then released. Transcriptional regulator specifically required to activate expression of the toxin gene locus, composed of tcsL and tcdE/utxA. The sequence is that of RNA polymerase sigma factor TcsR from Paraclostridium sordellii (Clostridium sordellii).